Consider the following 769-residue polypeptide: Probable beta-glucosidase M (769 aa).

The first 22 residues, 1 to 22 (MHSNLGLAGLAGLLATASVCLS), serve as a signal peptide directing secretion. N-linked (GlcNAc...) asparagine glycans are attached at residues Asn-28, Asn-75, and Asn-262. Residue Asp-290 is part of the active site. 4 N-linked (GlcNAc...) asparagine glycosylation sites follow: Asn-318, Asn-325, Asn-437, and Asn-546.

It belongs to the glycosyl hydrolase 3 family.

It localises to the secreted. It catalyses the reaction Hydrolysis of terminal, non-reducing beta-D-glucosyl residues with release of beta-D-glucose.. It functions in the pathway glycan metabolism; cellulose degradation. Beta-glucosidases are one of a number of cellulolytic enzymes involved in the degradation of cellulosic biomass. Catalyzes the last step releasing glucose from the inhibitory cellobiose. The sequence is that of Probable beta-glucosidase M (bglM) from Neosartorya fischeri (strain ATCC 1020 / DSM 3700 / CBS 544.65 / FGSC A1164 / JCM 1740 / NRRL 181 / WB 181) (Aspergillus fischerianus).